The following is a 103-amino-acid chain: Defensin-like protein 268 (103 aa).

The signal sequence occupies residues 1–24 (MARLIFHFVFALILAAYLLSVTDA). Cystine bridges form between cysteine 44/cysteine 103, cysteine 68/cysteine 87, cysteine 74/cysteine 98, and cysteine 78/cysteine 100.

Belongs to the DEFL family.

Its subcellular location is the secreted. The chain is Defensin-like protein 268 from Arabidopsis thaliana (Mouse-ear cress).